The primary structure comprises 93 residues: Small ribosomal subunit protein uS19 (93 aa).

It belongs to the universal ribosomal protein uS19 family.

Protein S19 forms a complex with S13 that binds strongly to the 16S ribosomal RNA. The chain is Small ribosomal subunit protein uS19 from Arthrobacter sp. (strain FB24).